Reading from the N-terminus, the 249-residue chain is Triosephosphate isomerase (249 aa).

9–11 is a binding site for substrate; it reads NWK. The Electrophile role is filled by H95. E165 serves as the catalytic Proton acceptor. Residues G171, S210, and 231–232 each bind substrate; that span reads GG.

It belongs to the triosephosphate isomerase family. Homodimer.

The protein localises to the cytoplasm. The enzyme catalyses D-glyceraldehyde 3-phosphate = dihydroxyacetone phosphate. It participates in carbohydrate biosynthesis; gluconeogenesis. Its pathway is carbohydrate degradation; glycolysis; D-glyceraldehyde 3-phosphate from glycerone phosphate: step 1/1. Involved in the gluconeogenesis. Catalyzes stereospecifically the conversion of dihydroxyacetone phosphate (DHAP) to D-glyceraldehyde-3-phosphate (G3P). The polypeptide is Triosephosphate isomerase (Hyphomonas neptunium (strain ATCC 15444)).